The sequence spans 279 residues: ATP-dependent Clp protease proteolytic subunit-related protein 2, chloroplastic (279 aa).

Residues 1–54 constitute a chloroplast transit peptide; the sequence is MAVSFNTTLHQPSLSPSCSIKLYSGLKPQSASFLASGYQNLNKEFYGRVYKSLQ.

This sequence belongs to the peptidase S14 family. As to quaternary structure, component of the chloroplastic Clp protease core complex which consist of at least 16 proteins: CLPP4 (3 copies), CLPP5 (3 copies), CLPR4 (2 copies), ClpP1 (1 copy), CLPP6 (1 copy), CLPR2 (1 copy), CLPT1 (1 copy), CLPT2 (1 copy) and 3 copies of CLPP3 and/or CLPR1 and/or CLPR3. The core complex is organized in two heptameric rings, one containing CLPP3,4,5,6 in a 1:2:3:1 ratio and the other CLPP1 and CLPR1,2,3,4 in a 3:1:1:1:1 ratio. As to expression, expressed at least in leaves and roots.

The protein localises to the plastid. It localises to the chloroplast. Required for chloroplast development and integrity. Involved in the regulation of plastoglobules formation. This Arabidopsis thaliana (Mouse-ear cress) protein is ATP-dependent Clp protease proteolytic subunit-related protein 2, chloroplastic.